Consider the following 56-residue polypeptide: uncharacterized protein (56 aa).

The chain crosses the membrane as a helical span at residues 2–22 (ILYIIVAISILLNIILGIKVI).

It is found in the membrane. This is an uncharacterized protein from Methanocaldococcus jannaschii (strain ATCC 43067 / DSM 2661 / JAL-1 / JCM 10045 / NBRC 100440) (Methanococcus jannaschii).